The sequence spans 224 residues: ATP-dependent dethiobiotin synthetase BioD (224 aa).

14–19 (GIGKTV) provides a ligand contact to ATP. Threonine 18 is a binding site for Mg(2+). Lysine 39 is a catalytic residue. Serine 43 contributes to the substrate binding site. ATP-binding positions include aspartate 56, 117-120 (EGVG), and 177-178 (NE). Positions 56 and 117 each coordinate Mg(2+).

It belongs to the dethiobiotin synthetase family. Homodimer. It depends on Mg(2+) as a cofactor.

It is found in the cytoplasm. The enzyme catalyses (7R,8S)-7,8-diammoniononanoate + CO2 + ATP = (4R,5S)-dethiobiotin + ADP + phosphate + 3 H(+). It functions in the pathway cofactor biosynthesis; biotin biosynthesis; biotin from 7,8-diaminononanoate: step 1/2. Its function is as follows. Catalyzes a mechanistically unusual reaction, the ATP-dependent insertion of CO2 between the N7 and N8 nitrogen atoms of 7,8-diaminopelargonic acid (DAPA, also called 7,8-diammoniononanoate) to form a ureido ring. The polypeptide is ATP-dependent dethiobiotin synthetase BioD (Xanthomonas campestris pv. campestris (strain B100)).